The chain runs to 126 residues: UPF0325 protein VFMJ11_2099 (126 aa).

This sequence belongs to the UPF0325 family.

The protein is UPF0325 protein VFMJ11_2099 of Aliivibrio fischeri (strain MJ11) (Vibrio fischeri).